Reading from the N-terminus, the 5875-residue chain is Probable E3 ubiquitin-protein ligase DDB_G0283893 (5875 aa).

Disordered regions lie at residues 17–64 (DNNN…QPPE), 164–185 (NNNN…QSNN), 232–276 (DSNN…TTTS), 302–342 (PSFK…CGNG), 642–693 (TTTT…SPPI), 716–740 (SIRS…TTNA), 1081–1101 (ITPT…TSIP), 1291–1367 (DGWE…KEST), 1806–1851 (QESE…SSPP), 1952–1982 (KKPS…KDEV), 2008–2036 (EDED…DDEE), 2109–2203 (KALK…TGSG), 2893–2930 (DSDD…TNDS), 3083–3119 (TSPS…SGSN), and 3195–3214 (LLPP…DNTN). Low complexity predominate over residues 18–52 (NNNNNNNNNNNNNNNNNNNNNNNNNNNSNNNNNKN). Residues 237-249 (DNKENKKEDKESS) are compositionally biased toward basic and acidic residues. Low complexity-rich tracts occupy residues 250–276 (KPIA…TTTS), 317–333 (TSTI…ITQP), and 642–656 (TTTT…TTTT). The span at 657–669 (NESIPMETTRSST) shows a compositional bias: polar residues. Residues 670-693 (PIPIVNNNNNNNDSKSNSKKSPPI) are compositionally biased toward low complexity. A compositionally biased stretch (polar residues) spans 716-725 (SIRSSSNKVN). Residues 728-740 (TPKSSTTTTTTNA) show a composition bias toward low complexity. Acidic residues predominate over residues 1297-1330 (FNDDDDEEEDEEEEEEMDEDDSENDEDEDSEESE). Positions 1300 to 1328 (DDDEEEDEEEEEEMDEDDSENDEDEDSEE) form a coiled coil. Composition is skewed to low complexity over residues 1347 to 1363 (TTTT…TATT) and 1838 to 1851 (SNSS…SSPP). A compositionally biased stretch (basic residues) spans 1963–1977 (GGCHHSNHHHHHHHS). The UBR-type zinc-finger motif lies at 2042–2113 (KVCTYTFTKN…KGNPCKALKP (72 aa)). Composition is skewed to low complexity over residues 2118–2168 (PPKQ…TNTN) and 2178–2203 (SSSS…TGSG). Positions 2893-2903 (DSDDSDDEFPT) are enriched in acidic residues. The span at 2908 to 2917 (VTSSGLSTSA) shows a compositional bias: low complexity. A compositionally biased stretch (low complexity) spans 3201–3211 (SSSNENVVDND). The segment at 3226–3280 (EVLFSCDLCNINPITGKRWNCSNCGDFDLCNQCYQNPEKDHPKDHIFKEFIIDEP) adopts a ZZ-type zinc-finger fold. Positions 3231, 3234, 3246, 3249, 3255, 3258, 3266, and 3270 each coordinate Zn(2+). Disordered regions lie at residues 3282–3312 (KDGD…QDDS), 3326–3359 (LNNN…PTTN), and 3754–3776 (SSTS…SNDI). Composition is skewed to low complexity over residues 3295–3307 (QQQK…LQQD) and 3327–3358 (NNNN…TPTT). Positions 3313–3332 (EYDEELKIAISMSLNNNNNN) constitute a UIM domain. Residues 3754 to 3763 (SSTSQDTQQE) show a composition bias toward polar residues. Over residues 3764–3774 (SSNNNNNNNSN) the composition is skewed to low complexity. Residues 4118-4146 (IENQEDHKRAIQTIEKESENAHKKYQRLI) are a coiled coil. The span at 4182–4222 (NTSTNSTGSNNQSINSSSGNISTNSSSSSSSSFGISNQSSS) shows a compositional bias: low complexity. Disordered regions lie at residues 4182–4237 (NTST…GGVI), 4295–4323 (FISG…RQCP), and 4616–4671 (KILS…FDND). Residues 4223-4236 (GNGGGGVGSGGGGV) show a composition bias toward gly residues. Residues 4308 to 4317 (QQQQQQQQQQ) show a composition bias toward low complexity. The stretch at 4585 to 4618 (QIQQQIALQQQQIQQQIQQQQQQLNESVSGLKIL) forms a coiled coil. Low complexity-rich tracts occupy residues 4619 to 4635 (SPSS…ATGS) and 4645 to 4659 (SSGS…ISSS). The tract at residues 5357–5870 (PALPFVLVLL…EYLLKLYKSV (514 aa)) is UBR4 E3 catalytic module. A HemiRING-type zinc finger spans residues 5476–5620 (GFTCMVCREG…WVNLNNISRV (145 aa)). 4 residues coordinate Zn(2+): Cys5479, Cys5482, His5554, and Cys5557. The region spanning 5623-5870 (PKFRILSHDL…EYLLKLYKSV (248 aa)) is the UZI domain. A coiled-coil region spans residues 5819 to 5846 (QVDVKELLNCFENELKEFQDEMEFFDDE).

Belongs to the UBR4 family.

The protein operates within protein modification; protein ubiquitination. Functionally, probable E3 ubiquitin-protein ligase. The polypeptide is Probable E3 ubiquitin-protein ligase DDB_G0283893 (Dictyostelium discoideum (Social amoeba)).